We begin with the raw amino-acid sequence, 662 residues long: NADH-ubiquinone oxidoreductase chain 5 (662 aa).

16 helical membrane-spanning segments follow: residues 40 to 62, 77 to 99, 112 to 129, 133 to 155, 168 to 190, 200 to 222, 243 to 262, 272 to 294, 301 to 320, 325 to 347, 360 to 382, 408 to 430, 450 to 472, 510 to 529, 609 to 631, and 636 to 658; these read AALS…IVIG, LFDS…VHLY, RFFS…VLVA, YFIM…NFWY, LTVN…WVFG, VAPY…GAMA, VSAL…LMLR, TVLV…TGLL, VIAY…VGLS, ALFH…GAVI, GGLV…SLMA, TIAY…RLVS, APMI…GYIA, LLPA…LYHV, GVIT…LVFA, and VFNE…LPSS.

Belongs to the complex I subunit 5 family.

The protein localises to the mitochondrion inner membrane. The enzyme catalyses a ubiquinone + NADH + 5 H(+)(in) = a ubiquinol + NAD(+) + 4 H(+)(out). Functionally, core subunit of the mitochondrial membrane respiratory chain NADH dehydrogenase (Complex I) that is believed to belong to the minimal assembly required for catalysis. Complex I functions in the transfer of electrons from NADH to the respiratory chain. The immediate electron acceptor for the enzyme is believed to be ubiquinone. The chain is NADH-ubiquinone oxidoreductase chain 5 (ND5) from Cryptococcus neoformans var. grubii serotype A (strain H99 / ATCC 208821 / CBS 10515 / FGSC 9487) (Filobasidiella neoformans var. grubii).